Here is a 188-residue protein sequence, read N- to C-terminus: CXXC-type zinc finger protein 4 (188 aa).

The disordered stretch occupies residues Met-1–Gln-20. The CXXC-type zinc finger occupies Ala-122–Glu-163. The Zn(2+) site is built by Cys-129, Cys-132, Cys-135, Cys-141, Cys-144, Cys-147, Cys-157, and Cys-162.

The protein resides in the cytoplasm. In terms of biological role, acts as a negative regulator of the Wnt signaling pathway required for anterior neural structure formation. Binds preferentially to DNA containing cytidine-phosphate-guanosine (CpG) dinucleotides over CpH (H=A, T, and C), hemimethylated-CpG and hemimethylated-hydroxymethyl-CpG. The sequence is that of CXXC-type zinc finger protein 4 (cxxc4) from Xenopus tropicalis (Western clawed frog).